Reading from the N-terminus, the 1005-residue chain is Espin-like protein (1005 aa).

ANK repeat units follow at residues 1-31 (MEAQ…RPDI), 35-64 (LGAG…LPGN), 69-99 (NGAT…GLQD), 103-132 (SGVS…AATL), 136-166 (EGAL…GVNQ), 170-200 (SGAS…DVRL), 204-234 (DGMS…GLTA), 238-267 (EGAT…PIMR), 270-299 (WGGT…DPFL), and 303-332 (DGYT…PVRV). Disordered regions lie at residues 355–383 (EERR…VPRE) and 458–480 (ADHP…AAEQ). Residues 458–469 (ADHPPEDQDQSQ) are compositionally biased toward basic and acidic residues. Residues 502-539 (EDDLVYLEKQINDLQLRRRCQEYESELGRLAAQLQALL) adopt a coiled-coil conformation. Disordered regions lie at residues 611-643 (LAQG…QREI), 692-729 (PRGD…GPGL), 764-794 (LEAQ…PRLG), and 951-975 (PHAS…SQGS).

In terms of assembly, interacts with MYO3A (via C-terminus). Interacts with MYO3B (via C-terminus). In terms of tissue distribution, expressed in inner ear hair cells. Expressed in utricle hair bundles (at protein level). Expressed in choclea (at protein level).

It localises to the cell projection. It is found in the stereocilium. Functionally, binds to but does not cross-link actin. Required for the formation and maintenance of inner ear hair cell stereocilia and staircase formation. Essential for normal hearing. This chain is Espin-like protein (Espnl), found in Mus musculus (Mouse).